A 791-amino-acid chain; its full sequence is Lon protease (791 aa).

Positions Leu28–Leu223 constitute a Lon N-terminal domain. Gly374–Thr381 serves as a coordination point for ATP. The region spanning Lys610 to Val791 is the Lon proteolytic domain. Catalysis depends on residues Ser697 and Lys740.

This sequence belongs to the peptidase S16 family. In terms of assembly, homohexamer. Organized in a ring with a central cavity.

It localises to the cytoplasm. It catalyses the reaction Hydrolysis of proteins in presence of ATP.. ATP-dependent serine protease that mediates the selective degradation of mutant and abnormal proteins as well as certain short-lived regulatory proteins. Required for cellular homeostasis and for survival from DNA damage and developmental changes induced by stress. Degrades polypeptides processively to yield small peptide fragments that are 5 to 10 amino acids long. Binds to DNA in a double-stranded, site-specific manner. The protein is Lon protease of Aster yellows witches'-broom phytoplasma (strain AYWB).